We begin with the raw amino-acid sequence, 602 residues long: Sensor histidine kinase AtsR (602 aa).

Transmembrane regions (helical) follow at residues 11–31 (IIVA…FLLF) and 182–202 (AIVM…LLLF). One can recognise a Histidine kinase domain in the interval 242-461 (MVSHELRTPL…EFVVTLPVEL (220 aa)). His-245 bears the Phosphohistidine; by autocatalysis mark. The Response regulatory domain occupies 484 to 601 (HALVVDDNEN…TLNGIVSRLR (118 aa)). Residue Asp-533 is modified to 4-aspartylphosphate.

It is found in the cell inner membrane. The enzyme catalyses ATP + protein L-histidine = ADP + protein N-phospho-L-histidine.. Member of a two-component regulatory system involved in control of gene expression; inhibits synthesis of (at least) the polyketide antibiotic thailandamide. Its two-component partner may be BTH_I0635. In Burkholderia thailandensis (strain ATCC 700388 / DSM 13276 / CCUG 48851 / CIP 106301 / E264), this protein is Sensor histidine kinase AtsR.